Reading from the N-terminus, the 341-residue chain is GTP-binding protein GTR2 (341 aa).

5 residues coordinate GTP: Ser-23, Ser-24, Ser-43, His-124, and Asp-127.

The protein belongs to the GTR/RAG GTP-binding protein family. In terms of assembly, heterodimer; with GTR1. Component of the GSE complex composed of GTR1, GTR2, SLM4, MEH1 and LTV1. Component of the EGO complex, at least composed of GTR2, SLM4 and MEH1. Interacts with GTR1; the interaction is direct.

Its subcellular location is the vacuole membrane. The enzyme catalyses GTP + H2O = GDP + phosphate + H(+). Functionally, GTPase involved in activation of the TORC1 signaling pathway, which promotes growth and represses autophagy in nutrient-rich conditions. Also required for TORC1 inactivation during nitrogen starvation. Required for intracellular sorting of GAP1 out of the endosome. Involved in the regulation of microautophagy. In Saccharomyces cerevisiae (strain ATCC 204508 / S288c) (Baker's yeast), this protein is GTP-binding protein GTR2.